A 766-amino-acid polypeptide reads, in one-letter code: MSPLARTPRKTSVLDTVEHAATTPDQPQPYGELGLKDDEYRRIRQILGRRPTDTELAMYSVMWSEHCSYKSSKVHLRYFGETTSDEMRAAMLAGIGENAGVVDIGDGWAVTFKVESHNHPSYVEPYQGAATGVGGIVRDIMAMGARPVAVMDQLRFGAADAPDTRRVLDGVVRGIGGYGNSLGLPNIGGETVFDPCYAGNPLVNALCVGVLRQEDLHLAFASGAGNKIILFGARTGLDGIGGVSVLASDTFDAEGSRKKLPSVQVGDPFMEKVLIECCLELYAGGLVIGIQDLGGAGLSCATSELASAGDGGMTIQLDSVPLRAKEMTPAEVLCSESQERMCAVVSPKNVDAFLAVCRKWEVLATVIGEVTDGDRLQITWHGETVVDVPPRTVAHEGPVYQRPVARPDTQDALNADRSAKLSRPVTGDELRATLLALLGSPHLCSRAFITEQYDRYVRGNTVLAEHADGGMLRIDESTGRGIAVSTDASGRYTLLDPYAGAQLALAEAYRNVAVTGATPVAVTNCLNFGSPEDPGVMWQFTQAVRGLADGCADLGIPVTGGNVSFYNQTGSAAILPTPVVGVLGVIDDVRRRIPTGLGAEPGETLMLLGDTRDEFDGSVWAQVTADHLGGLPPVVDLAREKLLAAVLSSASRDGLVSAAHDLSEGGLAQAIVESALAGETGCRIVLPEGADPFVLLFSESAGRVLVAVPRTEESRFRGMCEARGLPAVRIGVVDQGSDAVEVQGLFAVSLAELRATSEAVLPRYFG.

The active site involves H66. Residues Y69 and K113 each coordinate ATP. E115 provides a ligand contact to Mg(2+). Substrate-binding positions include 116–119 (SHNH) and R138. The active-site Proton acceptor is H117. Residue D139 participates in Mg(2+) binding. Q264 contacts substrate. Residue D292 coordinates Mg(2+). 336-338 (ESQ) is a substrate binding site. Residues N524 and G561 each contribute to the ATP site. N562 provides a ligand contact to Mg(2+). S564 provides a ligand contact to substrate.

The protein belongs to the FGAMS family. In terms of assembly, monomer. Part of the FGAM synthase complex composed of 1 PurL, 1 PurQ and 2 PurS subunits.

It localises to the cytoplasm. The enzyme catalyses N(2)-formyl-N(1)-(5-phospho-beta-D-ribosyl)glycinamide + L-glutamine + ATP + H2O = 2-formamido-N(1)-(5-O-phospho-beta-D-ribosyl)acetamidine + L-glutamate + ADP + phosphate + H(+). It participates in purine metabolism; IMP biosynthesis via de novo pathway; 5-amino-1-(5-phospho-D-ribosyl)imidazole from N(2)-formyl-N(1)-(5-phospho-D-ribosyl)glycinamide: step 1/2. Its function is as follows. Part of the phosphoribosylformylglycinamidine synthase complex involved in the purines biosynthetic pathway. Catalyzes the ATP-dependent conversion of formylglycinamide ribonucleotide (FGAR) and glutamine to yield formylglycinamidine ribonucleotide (FGAM) and glutamate. The FGAM synthase complex is composed of three subunits. PurQ produces an ammonia molecule by converting glutamine to glutamate. PurL transfers the ammonia molecule to FGAR to form FGAM in an ATP-dependent manner. PurS interacts with PurQ and PurL and is thought to assist in the transfer of the ammonia molecule from PurQ to PurL. The polypeptide is Phosphoribosylformylglycinamidine synthase subunit PurL (Mycobacterium bovis (strain BCG / Pasteur 1173P2)).